The primary structure comprises 723 residues: MEQEKRVFSIDVAGRPLIIETGELAKQANGAALVRYGDTVVLSTATASREAKNVDFFPLTVNYEERLYAVGKIPGGFIKREGRPSEKAILVSRLIDRPIRPLFAEGFRNEVQVVSMVMSVDQDCAPEVAALIGSSVALTISDIPFEGPIAGVIVGRVDGQFVINPTVEQMEKSDLHLVVAGTKDAINMVEAGADEVPEEVILEAIMFGHEEVKRLIAFQEEIAAQVGKEKMEVVLYEPDPALEAEIRQLAEADIKRAVQVPEKLARDAAIEDVKAGVIAKYEAEEADEEKLKQVQEILHKLVKEEVRRLITVEKIRPDGRKVDEIRPLSSAVGVLPRTHGSGLFTRGQTQVLSVCTLGALGDVQILDGLDLEESKRFMHHYNFPPFSVGETGPMRGPGRREIGHGALGERALEPVVPSEREFPYTIRLVSEVLESNGSTSQASICASTLAMMDAGVPIKAPVAGIAMGLVKNDDHYTILTDIQGIEDHLGDMDFKVAGTRKGVTALQMDIKIKGLTREILEEALMQARKGRLEILDHMMQTLSEPRKELSKYAPKILIMHINPDKIREVIGPSGKQINKIIDETGVKIDIEQDGTIFISSVDEAANQKAKQIIEDIVREVEVGQVYLGKVKRIEKFGAFVELFNGKDGLVHISELAEGRVGKVEDVVSIGDEILVKVTEIDKQGRVNLSRKAVLRDARNIGGELPRESREKRGRRPERHRMKP.

Residues Asp-487 and Asp-493 each coordinate Mg(2+). Residues 554 to 613 (PKILIMHINPDKIREVIGPSGKQINKIIDETGVKIDIEQDGTIFISSVDEAANQKAKQII) form the KH domain. Residues 623–691 (GQVYLGKVKR…KQGRVNLSRK (69 aa)) enclose the S1 motif domain. Positions 702-723 (GELPRESREKRGRRPERHRMKP) are disordered. Residues 711–723 (KRGRRPERHRMKP) show a composition bias toward basic residues.

The protein belongs to the polyribonucleotide nucleotidyltransferase family. The cofactor is Mg(2+).

It is found in the cytoplasm. It carries out the reaction RNA(n+1) + phosphate = RNA(n) + a ribonucleoside 5'-diphosphate. Involved in mRNA degradation. Catalyzes the phosphorolysis of single-stranded polyribonucleotides processively in the 3'- to 5'-direction. The sequence is that of Polyribonucleotide nucleotidyltransferase from Geobacillus kaustophilus (strain HTA426).